Consider the following 283-residue polypeptide: Hydroxyacylglutathione hydrolase-like protein (283 aa).

Zn(2+)-binding residues include H54, H56, D58, H59, H110, D134, and H173.

Belongs to the metallo-beta-lactamase superfamily. Glyoxalase II family. Zn(2+) serves as cofactor.

Hydrolase acting on ester bonds. This Mus musculus (Mouse) protein is Hydroxyacylglutathione hydrolase-like protein (Haghl).